The chain runs to 236 residues: Dense granule protein 7 (236 aa).

The N-terminal stretch at 1 to 26 is a signal peptide; that stretch reads MARHAIFSALCVLGLVAAALPQFATA. The disordered stretch occupies residues 45 to 106; the sequence is DGQAPVDSLR…EVHFRKRGVR (62 aa). Over residues 70-80 the composition is skewed to polar residues; it reads TTSMDKASVES. The interval 147 to 236 is required for dimerization, interactions with liposomes and liposome tubulation; the sequence is AVGMGASYFA…SGEDGEDARQ (90 aa). The chain crosses the membrane as a helical span at residues 181–201; it reads VGTVLGFAALAAAAAFLGMGL. Residues 208 to 236 form a disordered region; that stretch reads FSPRKNRSRQPALEQEVPESGEDGEDARQ. N213 carries an N-linked (GlcNAc...) asparagine glycan. Over residues 223 to 236 the composition is skewed to acidic residues; that stretch reads EVPESGEDGEDARQ.

It belongs to the Gra7 family. In terms of assembly, homodimer. Can form higher order homooligomers in a lipid-stimulated manner. Component of a complex at least composed of ROP18, GRA7 and ROP2. Interacts with ROP5. Interacts with ROP18 in the absence of ROP5. Interacts with mouse IRGA6/IIGP1 in GTP-dependent manner; the interaction results in faster turnover of the GTP-activated IRGA6/IIGP1 oligomer. Interacts with mouse TRAF6 (via N-terminal RING domain); the interaction plays a role in GRA7-induced pro-inflammatory cytokine production in mouse macrophages.

Its subcellular location is the secreted. The protein localises to the parasitophorous vacuole lumen. The protein resides in the parasitophorous vacuole membrane. It is found in the cytoplasm. It localises to the host cytoplasm. Its subcellular location is the cytoplasmic vesicle. The protein localises to the secretory vesicle. Binds lipid bilayers, sequesters host endocytic organelles in the parasitophorous vacuole space, and causes their deformation and remodeling. Plays a role in nutrient acquisition from the host. In complex with ROP18, targets immunity-related GTPases (IRGs) to prevent IRG-mediated parasite killing by mouse cells. Important component within a kinase complex, contributing to phosphorylation of mouse IRGA6/IIGP1, an immunity-related GTPase that protects mice from infection by certain intracellular pathogens, by Toxoplasma gondii ROP5 and ROP18. Induces pro-inflammatory cytokine production in host macrophages. Activates host pro-inflammatory signaling pathways in a MyD88-dependent manner. Triggers generation of reactive oxygen species (ROS) in host cells. Activates MAPK pathway in host cells. Activates host NF-kappa-B signaling pathway by interacting with TRAF6 and modulating the 'Lys-63'-linked polyubiquitination of TRAF6. The chain is Dense granule protein 7 from Toxoplasma gondii.